Here is a 504-residue protein sequence, read N- to C-terminus: Deoxyguanosinetriphosphate triphosphohydrolase (504 aa).

Residues 66–273 (RLTHSMEVQQ…MEAADDISYC (208 aa)) form the HD domain.

Belongs to the dGTPase family. Type 1 subfamily. In terms of assembly, homotetramer. Mg(2+) is required as a cofactor.

It carries out the reaction dGTP + H2O = 2'-deoxyguanosine + triphosphate + H(+). In terms of biological role, dGTPase preferentially hydrolyzes dGTP over the other canonical NTPs. In Citrobacter koseri (strain ATCC BAA-895 / CDC 4225-83 / SGSC4696), this protein is Deoxyguanosinetriphosphate triphosphohydrolase.